The primary structure comprises 285 residues: uncharacterized protein (285 aa).

Helical transmembrane passes span 6 to 26 (YLVV…TPLI), 38 to 58 (VFAA…YIFP), 84 to 104 (IFLL…IFLR), 110 to 130 (GVLA…ELIF), 153 to 173 (FMMH…DDGF), 176 to 196 (ISFF…ALMV), and 236 to 256 (LIFG…TVLV).

The protein localises to the cell membrane. This is an uncharacterized protein from Mycoplasma pneumoniae (strain ATCC 29342 / M129 / Subtype 1) (Mycoplasmoides pneumoniae).